Here is a 201-residue protein sequence, read N- to C-terminus: Anthranilate synthase component 2 (201 aa).

The region spanning 1–199 (MLLMIDNYDS…LRQQGGVRGE (199 aa)) is the Glutamine amidotransferase type-1 domain. 52–54 (GPC) contributes to the L-glutamine binding site. The active-site Nucleophile; for GATase activity is the cysteine 79. L-glutamine is bound by residues glutamine 83 and 129–130 (SL). Residues histidine 173 and glutamate 175 each act as for GATase activity in the active site.

In terms of assembly, heterotetramer consisting of two non-identical subunits: a beta subunit (TrpG) and a large alpha subunit (TrpE).

The enzyme catalyses chorismate + L-glutamine = anthranilate + pyruvate + L-glutamate + H(+). It participates in amino-acid biosynthesis; L-tryptophan biosynthesis; L-tryptophan from chorismate: step 1/5. Part of a heterotetrameric complex that catalyzes the two-step biosynthesis of anthranilate, an intermediate in the biosynthesis of L-tryptophan. In the first step, the glutamine-binding beta subunit (TrpG) of anthranilate synthase (AS) provides the glutamine amidotransferase activity which generates ammonia as a substrate that, along with chorismate, is used in the second step, catalyzed by the large alpha subunit of AS (TrpE) to produce anthranilate. In the absence of TrpG, TrpE can synthesize anthranilate directly from chorismate and high concentrations of ammonia. The chain is Anthranilate synthase component 2 from Pseudomonas aeruginosa (strain ATCC 15692 / DSM 22644 / CIP 104116 / JCM 14847 / LMG 12228 / 1C / PRS 101 / PAO1).